A 211-amino-acid polypeptide reads, in one-letter code: Protein-L-isoaspartate O-methyltransferase (211 aa).

Ser-60 is a catalytic residue.

Belongs to the methyltransferase superfamily. L-isoaspartyl/D-aspartyl protein methyltransferase family.

The protein localises to the cytoplasm. It carries out the reaction [protein]-L-isoaspartate + S-adenosyl-L-methionine = [protein]-L-isoaspartate alpha-methyl ester + S-adenosyl-L-homocysteine. Functionally, catalyzes the methyl esterification of L-isoaspartyl residues in peptides and proteins that result from spontaneous decomposition of normal L-aspartyl and L-asparaginyl residues. It plays a role in the repair and/or degradation of damaged proteins. In Pseudomonas paraeruginosa (strain DSM 24068 / PA7) (Pseudomonas aeruginosa (strain PA7)), this protein is Protein-L-isoaspartate O-methyltransferase.